Reading from the N-terminus, the 348-residue chain is UDP-glucose 4-epimerase (348 aa).

Residues 12–14 (GYI), 33–37 (DNFHN), 66–67 (DI), F88, and K92 contribute to the NAD(+) site. 132–134 (SAT) serves as a coordination point for substrate. Catalysis depends on Y157, which acts as the Proton acceptor. NAD(+) contacts are provided by K161 and Y185. Substrate-binding positions include 185-187 (YFN), 206-208 (NNL), 224-226 (NVF), R239, and 300-303 (REGD).

Belongs to the NAD(P)-dependent epimerase/dehydratase family. In terms of assembly, homodimer. The cofactor is NAD(+).

It carries out the reaction UDP-alpha-D-glucose = UDP-alpha-D-galactose. The catalysed reaction is UDP-N-acetyl-alpha-D-glucosamine = UDP-N-acetyl-alpha-D-galactosamine. It participates in carbohydrate metabolism; galactose metabolism. Functionally, catalyzes two distinct but analogous reactions: the reversible epimerization of UDP-glucose to UDP-galactose and the reversible epimerization of UDP-N-acetylglucosamine to UDP-N-acetylgalactosamine. The reaction with UDP-Gal plays a critical role in the Leloir pathway of galactose catabolism in which galactose is converted to the glycolytic intermediate glucose 6-phosphate. It contributes to the catabolism of dietary galactose and enables the endogenous biosynthesis of both UDP-Gal and UDP-GalNAc when exogenous sources are limited. Both UDP-sugar interconversions are important in the synthesis of glycoproteins and glycolipids. The polypeptide is UDP-glucose 4-epimerase (GALE) (Pongo abelii (Sumatran orangutan)).